The primary structure comprises 370 residues: tRNA 2-selenouridine synthase (370 aa).

Residues 12 to 136 (FLDDVPMMDM…MRTFLLETTQ (125 aa)) enclose the Rhodanese domain. Residue C95 is the S-selanylcysteine intermediate of the active site.

The protein belongs to the SelU family. As to quaternary structure, monomer.

It carries out the reaction 5-methylaminomethyl-2-thiouridine(34) in tRNA + selenophosphate + (2E)-geranyl diphosphate + H2O + H(+) = 5-methylaminomethyl-2-selenouridine(34) in tRNA + (2E)-thiogeraniol + phosphate + diphosphate. The catalysed reaction is 5-methylaminomethyl-2-thiouridine(34) in tRNA + (2E)-geranyl diphosphate = 5-methylaminomethyl-S-(2E)-geranyl-thiouridine(34) in tRNA + diphosphate. The enzyme catalyses 5-methylaminomethyl-S-(2E)-geranyl-thiouridine(34) in tRNA + selenophosphate + H(+) = 5-methylaminomethyl-2-(Se-phospho)selenouridine(34) in tRNA + (2E)-thiogeraniol. It catalyses the reaction 5-methylaminomethyl-2-(Se-phospho)selenouridine(34) in tRNA + H2O = 5-methylaminomethyl-2-selenouridine(34) in tRNA + phosphate. Its function is as follows. Involved in the post-transcriptional modification of the uridine at the wobble position (U34) of tRNA(Lys), tRNA(Glu) and tRNA(Gln). Catalyzes the conversion of 2-thiouridine (S2U-RNA) to 2-selenouridine (Se2U-RNA). Acts in a two-step process involving geranylation of 2-thiouridine (S2U) to S-geranyl-2-thiouridine (geS2U) and subsequent selenation of the latter derivative to 2-selenouridine (Se2U) in the tRNA chain. The chain is tRNA 2-selenouridine synthase from Pseudomonas putida (strain ATCC 700007 / DSM 6899 / JCM 31910 / BCRC 17059 / LMG 24140 / F1).